A 953-amino-acid polypeptide reads, in one-letter code: TPR repeat-containing protein ZIP4 (953 aa).

Residues 129–162 form a TPR 1 repeat; it reads ASFFHRSGLAWLDLGRVDLASACFEKATPLVSAA. A disordered region spans residues 248-269; sequence AASPSSSSPRTPPYGGATPKTP. 2 TPR repeats span residues 432–465 and 473–506; these read HALLWNCGTEHFRAKNYDTSADLIERSMLYVSRD and ADCFRVLSICHIALQHLDRALEFVNEAYKVEPNI. Residues 924–953 are disordered; sequence RVSGDEPDECSQEEAPKASISGSMSQPVLV. The span at 943-953 shows a compositional bias: polar residues; sequence ISGSMSQPVLV.

The protein localises to the nucleus. It is found in the chromosome. In terms of biological role, required for crossover formation, complete synapsis of homologous chromosomes and bivalent formation during meiosis. Is specific to recombination events resulting in interference-sensitive crossovers (class I meiotic crossover) and works cooperatively with MER3 to promote crossovers. In Oryza sativa subsp. indica (Rice), this protein is TPR repeat-containing protein ZIP4.